Here is a 147-residue protein sequence, read N- to C-terminus: Hemoglobin subunit beta-2 (147 aa).

The residue at position 2 (Val2) is an N-acetylvaline. Residues 3 to 147 (HLTDAEKSAV…VATALAHKYH (145 aa)) enclose the Globin domain. At Lys18 the chain carries N6-succinyllysine. Tyr42 is modified (phosphotyrosine). Phosphoserine occurs at positions 45, 51, and 53. Residue Lys60 is modified to N6-succinyllysine. The heme b site is built by His64 and His93. Arg105 is modified (asymmetric dimethylarginine). Phosphothreonine is present on Thr124.

Belongs to the globin family. In terms of assembly, heterotetramer of two alpha chains and two beta chains. As to expression, red blood cells.

In terms of biological role, involved in oxygen transport from the lung to the various peripheral tissues. The chain is Hemoglobin subunit beta-2 (Hbb-b2) from Mus musculus (Mouse).